Reading from the N-terminus, the 519-residue chain is Acetylcholine receptor subunit gamma (519 aa).

The N-terminal stretch at Met1–Ser22 is a signal peptide. Over Arg23–Lys240 the chain is Extracellular. 2 N-linked (GlcNAc...) asparagine glycosylation sites follow: Asn52 and Asn163. A disulfide bridge connects residues Cys150 and Cys164. 3 helical membrane-spanning segments follow: residues Pro241–Leu265, Cys274–Ala292, and Tyr308–Val329. The Cytoplasmic portion of the chain corresponds to Ser330–Arg476. The helical transmembrane segment at Val477–Ala497 threads the bilayer.

This sequence belongs to the ligand-gated ion channel (TC 1.A.9) family. Acetylcholine receptor (TC 1.A.9.1) subfamily. Gamma/CHRNG sub-subfamily. In terms of assembly, pentamer of two alpha chains, and one each of the beta, delta, and gamma (in immature muscle) or epsilon (in mature muscle) chains. In terms of tissue distribution, at least in myotubes of skeletal muscle.

It is found in the postsynaptic cell membrane. The protein localises to the cell membrane. The catalysed reaction is K(+)(in) = K(+)(out). It carries out the reaction Na(+)(in) = Na(+)(out). In terms of biological role, after binding acetylcholine, the AChR responds by an extensive change in conformation that affects all subunits and leads to opening of an ion-conducting channel across the plasma membrane. In Mus musculus (Mouse), this protein is Acetylcholine receptor subunit gamma (Chrng).